Here is a 317-residue protein sequence, read N- to C-terminus: HTH-type transcriptional repressor PA14_22550 (317 aa).

Residues 1–59 (MDKLTAMATFVKVVDAGSFTRAADALGLPKARVSQRVSDLEKHLGVRLLNRTTRALSLT) enclose the HTH lysR-type domain. A DNA-binding region (H-T-H motif) is located at residues 19-38 (FTRAADALGLPKARVSQRVS).

Belongs to the LysR transcriptional regulatory family.

In terms of biological role, represses the transcription of the operon that consists of PA14_22510 to PA14_22540. In Pseudomonas aeruginosa (strain UCBPP-PA14), this protein is HTH-type transcriptional repressor PA14_22550.